The sequence spans 530 residues: Glucocorticoid modulatory element-binding protein 2 (530 aa).

The region spanning glutamate 81–aspartate 163 is the SAND domain. Cysteine 110 contributes to the Zn(2+) binding site. DNA is bound by residues lysine 136, lysine 140, lysine 143, and arginine 154. Lysine 155 participates in a covalent cross-link: Glycyl lysine isopeptide (Lys-Gly) (interchain with G-Cter in SUMO1); alternate. Residue lysine 155 forms a Glycyl lysine isopeptide (Lys-Gly) (interchain with G-Cter in SUMO2); alternate linkage. Histidine 167, cysteine 171, and cysteine 175 together coordinate Zn(2+). Coiled coils occupy residues leucine 245–aspartate 270 and glutamine 304–leucine 344. The residue at position 373 (serine 373) is a Phosphoserine.

In terms of assembly, homodimer, and heterodimer of GMEB1 and GMEB2. Interacts with the glucocorticoid receptor (NR3C1). May interact with CREB-binding protein (CBP).

The protein resides in the nucleus. Its subcellular location is the cytoplasm. Functionally, trans-acting factor that binds to glucocorticoid modulatory elements (GME) present in the TAT (tyrosine aminotransferase) promoter and increases sensitivity to low concentrations of glucocorticoids. Also binds to the transferrin receptor promoter. In Mus musculus (Mouse), this protein is Glucocorticoid modulatory element-binding protein 2 (Gmeb2).